The sequence spans 1282 residues: Indigoidine synthase (1282 aa).

An adenylation region spans residues 24 to 379 (AQRVAEHPEA…GGIQLARGYL (356 aa)). The Carrier domain occupies 937–1012 (APRTETEKEI…KLARRLEREV (76 aa)). O-(pantetheine 4'-phosphoryl)serine is present on Ser972. The thioesterase stretch occupies residues 1030–1138 (RPVICWPGLG…APGSPKVRAE (109 aa)).

It belongs to the ATP-dependent AMP-binding enzyme family. Pantetheine 4'-phosphate is required as a cofactor.

It catalyses the reaction 2 FMN + 2 L-glutamine + 2 ATP + O2 = indigoidine + 2 FMNH2 + 2 AMP + 2 diphosphate + 2 H2O. The enzyme catalyses FMN + L-glutamine + ATP = 3-amino-1,5-dihydropyridine-2,6-dione + FMNH2 + AMP + diphosphate. The catalysed reaction is 2 3-amino-1,5-dihydropyridine-2,6-dione + O2 = indigoidine + 2 H2O. It functions in the pathway pigment biosynthesis. Its function is as follows. Nonribosomal peptide synthetase involved in the biosynthesis of the blue pigment indigoidine. Catalyzes the synthesis of the blue pigment using L-Gln as a substrate. Two glutamine molecules are cyclized and oxidized to form indigoidine. The chain is Indigoidine synthase from Streptomyces lavendulae.